The sequence spans 108 residues: Phosphoribosyl-ATP pyrophosphatase (108 aa).

The protein belongs to the PRA-PH family.

Its subcellular location is the cytoplasm. The enzyme catalyses 1-(5-phospho-beta-D-ribosyl)-ATP + H2O = 1-(5-phospho-beta-D-ribosyl)-5'-AMP + diphosphate + H(+). Its pathway is amino-acid biosynthesis; L-histidine biosynthesis; L-histidine from 5-phospho-alpha-D-ribose 1-diphosphate: step 2/9. The sequence is that of Phosphoribosyl-ATP pyrophosphatase from Geobacter sulfurreducens (strain ATCC 51573 / DSM 12127 / PCA).